Reading from the N-terminus, the 337-residue chain is uncharacterized protein (337 aa).

2 consecutive transmembrane segments (helical) span residues 241-261 (FTLL…GAFI) and 273-293 (ASLI…IGII).

It belongs to the glycosyltransferase 2 family.

It is found in the cell membrane. This is an uncharacterized protein from Bacillus subtilis (strain 168).